Here is a 168-residue protein sequence, read N- to C-terminus: Large ribosomal subunit protein bL17 (168 aa).

The tract at residues 124–168 (QATGEAEAATKRAAKDAEGSAEVSEAKVDTTKADDEAAAEESKDA) is disordered. Residues 131 to 168 (AATKRAAKDAEGSAEVSEAKVDTTKADDEAAAEESKDA) are compositionally biased toward basic and acidic residues.

The protein belongs to the bacterial ribosomal protein bL17 family. As to quaternary structure, part of the 50S ribosomal subunit. Contacts protein L32.

The protein is Large ribosomal subunit protein bL17 of Streptomyces coelicolor (strain ATCC BAA-471 / A3(2) / M145).